Reading from the N-terminus, the 228-residue chain is L-ribulose-5-phosphate 4-epimerase UlaF (228 aa).

Substrate is bound by residues 26–27 (GN), 43–44 (SG), and 72–73 (SS). Aspartate 74, histidine 93, and histidine 95 together coordinate Zn(2+). The active-site Proton donor/acceptor is the aspartate 118. A Zn(2+)-binding site is contributed by histidine 167. The Proton donor/acceptor role is filled by tyrosine 225.

This sequence belongs to the aldolase class II family. AraD/FucA subfamily. Requires Zn(2+) as cofactor.

It carries out the reaction L-ribulose 5-phosphate = D-xylulose 5-phosphate. It functions in the pathway cofactor degradation; L-ascorbate degradation; D-xylulose 5-phosphate from L-ascorbate: step 4/4. In terms of biological role, catalyzes the isomerization of L-ribulose 5-phosphate to D-xylulose 5-phosphate. Is involved in the anaerobic L-ascorbate utilization. This is L-ribulose-5-phosphate 4-epimerase UlaF from Escherichia coli (strain ATCC 8739 / DSM 1576 / NBRC 3972 / NCIMB 8545 / WDCM 00012 / Crooks).